A 131-amino-acid chain; its full sequence is UPF0102 protein YraN (131 aa).

Residues 1–19 (MATVPTRSGSPRQLTTKQT) are compositionally biased toward polar residues. Residues 1-20 (MATVPTRSGSPRQLTTKQTG) form a disordered region.

Belongs to the UPF0102 family.

The protein is UPF0102 protein YraN of Escherichia coli (strain 55989 / EAEC).